A 310-amino-acid chain; its full sequence is N-acetyl-gamma-glutamyl-phosphate reductase (310 aa).

Residue cysteine 117 is part of the active site.

It belongs to the NAGSA dehydrogenase family. Type 2 subfamily.

It is found in the cytoplasm. It catalyses the reaction N-acetyl-L-glutamate 5-semialdehyde + phosphate + NADP(+) = N-acetyl-L-glutamyl 5-phosphate + NADPH + H(+). It functions in the pathway amino-acid biosynthesis; L-arginine biosynthesis; N(2)-acetyl-L-ornithine from L-glutamate: step 3/4. Functionally, catalyzes the NADPH-dependent reduction of N-acetyl-5-glutamyl phosphate to yield N-acetyl-L-glutamate 5-semialdehyde. The protein is N-acetyl-gamma-glutamyl-phosphate reductase of Brucella ovis (strain ATCC 25840 / 63/290 / NCTC 10512).